The sequence spans 349 residues: DNA-directed RNA polymerase subunit Rpo1N (349 aa).

Residues Glu306 to Asp349 form a disordered region. The span at Ala324–Ser334 shows a compositional bias: basic and acidic residues.

Belongs to the RNA polymerase beta' chain family. Part of the RNA polymerase complex.

The protein localises to the cytoplasm. It carries out the reaction RNA(n) + a ribonucleoside 5'-triphosphate = RNA(n+1) + diphosphate. In terms of biological role, DNA-dependent RNA polymerase (RNAP) catalyzes the transcription of DNA into RNA using the four ribonucleoside triphosphates as substrates. Forms the clamp head domain. The protein is DNA-directed RNA polymerase subunit Rpo1N of Halococcus morrhuae (Micrococcus morrhuae).